Here is a 142-residue protein sequence, read N- to C-terminus: DNA-directed RNA polymerases I, II, and III subunit rpabc3 (142 aa).

A non-specific ssDNA binding region spans residues 16–40; sequence DPDGKKFDRVSRFVCYSENYEMDLQ.

It belongs to the eukaryotic RPB8 RNA polymerase subunit family. Component of the RNA polymerase I (Pol I), RNA polymerase II (Pol II) and RNA polymerase III (Pol III) complexes consisting of at least 13, 12 and 17 subunits, respectively. Directly interacts with POLR2A.

The protein resides in the nucleus. It is found in the nucleolus. DNA-dependent RNA polymerase catalyzes the transcription of DNA into RNA using the four ribonucleoside triphosphates as substrates. Common component of RNA polymerases I, II and III which synthesize ribosomal RNA precursors, mRNA precursors and many functional non-coding RNAs, and small RNAs, such as 5S rRNA and tRNAs, respectively. This chain is DNA-directed RNA polymerases I, II, and III subunit rpabc3 (polr2h), found in Dictyostelium discoideum (Social amoeba).